A 733-amino-acid polypeptide reads, in one-letter code: Neutral ceramidase 3 (733 aa).

Positions 1–25 are cleaved as a signal peptide; sequence MTRWSMSMHCTLFLLFLLRLTCIFS. Residue serine 307 is the Nucleophile of the active site. Asparagine 325 carries N-linked (GlcNAc...) asparagine glycosylation.

It belongs to the neutral ceramidase family.

The protein localises to the secreted. It is found in the endoplasmic reticulum. Its subcellular location is the golgi apparatus. The catalysed reaction is an N-acylsphing-4-enine + H2O = sphing-4-enine + a fatty acid. In terms of biological role, hydrolyzes the sphingolipid ceramide into sphingosine and free fatty acid. Promotes oxidative stress resistance. This is Neutral ceramidase 3 from Arabidopsis thaliana (Mouse-ear cress).